The following is a 63-amino-acid chain: Conotoxin Cal12.5 (63 aa).

Positions 1–21 are cleaved as a signal peptide; it reads MKVTCVLVVLLLLLPYGDLLG.

Belongs to the conotoxin O1 superfamily. Post-translationally, contains 4 disulfide bonds. Expressed by the venom duct.

The protein localises to the secreted. In terms of biological role, probable neurotoxin. This Californiconus californicus (California cone) protein is Conotoxin Cal12.5.